Reading from the N-terminus, the 272-residue chain is HTH-type transcriptional repressor AllR (272 aa).

A disordered region spans residues 1–20 (MTEVRRRGRPGQAEPTAQKG). Residues 21-83 (AQALERGIAI…SQLGWWHIGL (63 aa)) form the HTH iclR-type domain. Positions 43–62 (VSDISGSLDLPLSTTFRLLK) form a DNA-binding region, H-T-H motif. The 170-residue stretch at 98–267 (VLSVAGPFMH…AKDISTALGL (170 aa)) folds into the IclR-ED domain. Residues 154–156 (SGA), D207, C217, and 234–236 (SIS) contribute to the glyoxylate site.

In terms of biological role, negative regulator of allantoin and glyoxylate utilization operons. Binds to the gcl promoter and to the allS-allA intergenic region. This chain is HTH-type transcriptional repressor AllR (allR), found in Salmonella paratyphi A (strain ATCC 9150 / SARB42).